The following is a 2094-amino-acid chain: Non-reducing polyketide synthase ustP (2094 aa).

Residues 9 to 243 (VFGDLSVPYH…GKIQVGGLFH (235 aa)) are N-terminal acylcarrier protein transacylase (SAT) domain. Positions 357–377 (NTAGVDSSSRGSGHADAEKQP) are disordered. The Ketosynthase family 3 (KS3) domain occupies 379–813 (RSKIAIIGFS…GGNSSVLVED (435 aa)). Residues cysteine 551, histidine 686, and histidine 727 each act as for beta-ketoacyl synthase activity in the active site. Residues 914-1227 (FSFTGQGSQY…EDDCKIFTPA (314 aa)) are malonyl-CoA:ACP transacylase (MAT) domain. Catalysis depends on serine 1004, which acts as the For acyl/malonyl transferase activity. Residues 1305 to 1629 (TTSVQYITAE…QRKVLDLVLP (325 aa)) are product template (PT) domain. Residues 1308 to 1445 (VQYITAESYG…CSGFFTDKSR (138 aa)) are N-terminal hotdog fold. Residues 1308-1625 (VQYITAESYG…FAAVQRKVLD (318 aa)) form the PKS/mFAS DH domain. The Proton acceptor; for dehydratase activity role is filled by histidine 1341. Positions 1473 to 1625 (GSVHMIKTGM…FAAVQRKVLD (153 aa)) are C-terminal hotdog fold. The Proton donor; for dehydratase activity role is filled by aspartate 1536. The span at 1644-1671 (AAAAPSQRQQQQQQQQQQQPAQPVAASQ) shows a compositional bias: low complexity. The segment at 1644-1689 (AAAAPSQRQQQQQQQQQQQPAQPVAASQESGMDDMPPTLVPSEKKD) is disordered. The Carrier domain maps to 1689-1763 (DVPSEKLKVI…ELVRHILGSS (75 aa)). Serine 1723 bears the O-(pantetheine 4'-phosphoryl)serine mark. Residues 1762 to 1778 (SSTPSSDSGPATPSITP) show a composition bias toward polar residues. Residues 1762–1782 (SSTPSSDSGPATPSITPLQEP) form a disordered region. Residues 1844 to 2069 (KVWLFPDGSG…GVVEGAHHFS (226 aa)) form a claisen cyclase domain region. Serine 1916 acts as the For Claisen cyclase activity in catalysis.

The enzyme catalyses 6 malonyl-CoA + acetyl-CoA + 6 H(+) = naphtopyrone YWA1 + 6 CO2 + 7 CoA + H2O. Its pathway is secondary metabolite biosynthesis. Non-reducing polyketide synthase; part of the gene cluster that mediates the biosynthesis of ustilaginoidins, dimeric gamma-naphthopyrones isolated from different fungal species. The first step in the biosynthesis of ustilaginoidins is the production of gamma-naphthopyrone precursor YWA1 by the non-reducing polyketide synthase ustP, via condensation of one acetyl-CoA starter unit with 6 malonyl-CoA units. YWA1 is then probably substrate of the ustZ to yield norrubrofusarin via a dehydration reaction. A key enzyme in the biosynthetic pathway is the laccase ustL, which catalyzes the oxidative dimerization of norrubrofusarin to ustilaginoidin A. It can produce the M- and P-atropisomers in varying amounts, depending on the reaction conditions. For the biosynthesis of 3-methylustilaginoid in derivatives such as chaetochromin A, a methylated derivative of YWA1 is required. The C-methylation is considered to be catalyzed by ustM, the phosphopantetheine attachment site of which indicates that it acts on the growing polyketide chain before release of the product. For the biosynthesis of chaetochromin A, it is assumed that saturation of the D2 double bond takes place before dimerization, and is probably catalyzed by an external reductase because no candidate gene was identified within the cluster. The chain is Non-reducing polyketide synthase ustP from Ustilaginoidea virens (Rice false smut fungus).